The sequence spans 328 residues: UPF0421 protein SE_1574 (328 aa).

A run of 4 helical transmembrane segments spans residues 26 to 46 (LFCM…IVTI), 61 to 81 (LPAT…FGDQ), 109 to 129 (AVLT…FNFF), and 132 to 152 (LLTA…ILPP).

The protein belongs to the UPF0421 family.

The protein localises to the cell membrane. The chain is UPF0421 protein SE_1574 from Staphylococcus epidermidis (strain ATCC 12228 / FDA PCI 1200).